The sequence spans 230 residues: Protein GrpE (230 aa).

Disordered regions lie at residues 1–28 (MADE…EALK) and 209–230 (GVSK…EDNA). The segment covering 221–230 (NGASTSEDNA) has biased composition (polar residues).

Belongs to the GrpE family. In terms of assembly, homodimer.

The protein localises to the cytoplasm. Its function is as follows. Participates actively in the response to hyperosmotic and heat shock by preventing the aggregation of stress-denatured proteins, in association with DnaK and GrpE. It is the nucleotide exchange factor for DnaK and may function as a thermosensor. Unfolded proteins bind initially to DnaJ; upon interaction with the DnaJ-bound protein, DnaK hydrolyzes its bound ATP, resulting in the formation of a stable complex. GrpE releases ADP from DnaK; ATP binding to DnaK triggers the release of the substrate protein, thus completing the reaction cycle. Several rounds of ATP-dependent interactions between DnaJ, DnaK and GrpE are required for fully efficient folding. This is Protein GrpE from Brucella ovis (strain ATCC 25840 / 63/290 / NCTC 10512).